Here is a 325-residue protein sequence, read N- to C-terminus: Tetraacyldisaccharide 4'-kinase (325 aa).

55 to 62 (TAGGNGKT) is a binding site for ATP.

Belongs to the LpxK family.

It catalyses the reaction a lipid A disaccharide + ATP = a lipid IVA + ADP + H(+). It functions in the pathway glycolipid biosynthesis; lipid IV(A) biosynthesis; lipid IV(A) from (3R)-3-hydroxytetradecanoyl-[acyl-carrier-protein] and UDP-N-acetyl-alpha-D-glucosamine: step 6/6. Transfers the gamma-phosphate of ATP to the 4'-position of a tetraacyldisaccharide 1-phosphate intermediate (termed DS-1-P) to form tetraacyldisaccharide 1,4'-bis-phosphate (lipid IVA). The protein is Tetraacyldisaccharide 4'-kinase of Salmonella paratyphi C (strain RKS4594).